A 66-amino-acid polypeptide reads, in one-letter code: Large ribosomal subunit protein bL35 (66 aa).

Basic residues predominate over residues 1–16 (MPKQKTHRASAKRFKR). The interval 1 to 21 (MPKQKTHRASAKRFKRTGSGG) is disordered.

This sequence belongs to the bacterial ribosomal protein bL35 family.

The protein is Large ribosomal subunit protein bL35 of Streptococcus sanguinis (strain SK36).